The following is a 203-amino-acid chain: Histidine biosynthesis bifunctional protein HisIE (203 aa).

Positions 1–114 (MLTEQQRREL…FGDTAHQWLF (114 aa)) are phosphoribosyl-AMP cyclohydrolase. The interval 115–203 (LYQLEQLLAE…VIENLRKRHQ (89 aa)) is phosphoribosyl-ATP pyrophosphohydrolase.

It in the N-terminal section; belongs to the PRA-CH family. This sequence in the C-terminal section; belongs to the PRA-PH family.

It is found in the cytoplasm. It carries out the reaction 1-(5-phospho-beta-D-ribosyl)-ATP + H2O = 1-(5-phospho-beta-D-ribosyl)-5'-AMP + diphosphate + H(+). It catalyses the reaction 1-(5-phospho-beta-D-ribosyl)-5'-AMP + H2O = 1-(5-phospho-beta-D-ribosyl)-5-[(5-phospho-beta-D-ribosylamino)methylideneamino]imidazole-4-carboxamide. It participates in amino-acid biosynthesis; L-histidine biosynthesis; L-histidine from 5-phospho-alpha-D-ribose 1-diphosphate: step 2/9. The protein operates within amino-acid biosynthesis; L-histidine biosynthesis; L-histidine from 5-phospho-alpha-D-ribose 1-diphosphate: step 3/9. The polypeptide is Histidine biosynthesis bifunctional protein HisIE (Shigella sonnei (strain Ss046)).